The following is a 242-amino-acid chain: MKILIPTAKEMNTDLPSIEAIPLKPESQAVLDALALYSASQLESFYKVSAEKAAEEFQNIQALKRQTAQHYPALKLFDGLMYRNIKRDKLTEAEQDYLENHVFITSALYGVVPVLSPMAPHRLDFLMKLKVAGKTLKSHWKAAYDETLKKEEVIFSLLSSEFETVFSKEIRAKMVTFKFMEDRGGQLKIHSTISKKARGAFLTALIENQVQTVGEARRLNFAGFVYREDLSQPQGLVFVKEV.

It belongs to the UPF0246 family.

This chain is UPF0246 protein SPH_1662, found in Streptococcus pneumoniae (strain Hungary19A-6).